The following is a 287-amino-acid chain: PsbP domain-containing protein 1, chloroplastic (287 aa).

It belongs to the PsbP family. Partially associated with photosystem I (PSI) complex, but is not a subunit of the complex. Interacts with PsaA and PsaB, but not with PasF.

Its subcellular location is the plastid. It is found in the chloroplast thylakoid lumen. Its function is as follows. Photosystem I assembly factor that assists the proper folding and integration of PsaB and PsaA into the thylakoid membrane. The sequence is that of PsbP domain-containing protein 1, chloroplastic (PPD1) from Arabidopsis thaliana (Mouse-ear cress).